The sequence spans 306 residues: Glutathione transport system permease protein GsiC (306 aa).

Residues 1-8 (MLNYVIKR) are Cytoplasmic-facing. The chain crosses the membrane as a helical span at residues 9–29 (LLGLIPTLFIVSVLVFLFVHM). The Periplasmic segment spans residues 30–102 (LPGDPARLIA…SRFMPTLWLT (73 aa)). The 198-residue stretch at 95-292 (FMPTLWLTIT…LEFILINLVV (198 aa)) folds into the ABC transmembrane type-1 domain. A helical transmembrane segment spans residues 103–123 (ITSMVWAVIFGMAAGIIAAVW). At 124–134 (RNRWPDRLSMT) the chain is on the cytoplasmic side. The helical transmembrane segment at 135 to 155 (IAVSGISFPAFALGMLLIQVF) threads the bilayer. Over 156-168 (SVELGWLPTVGAD) the chain is Periplasmic. Residues 169–189 (SWQHYILSSLTLGAAVAAVMA) form a helical membrane-spanning segment. The Cytoplasmic portion of the chain corresponds to 190–228 (RFTRASFVDVLSEDYMRTARAKGVSETWVVLKHGLRNAM). The helical transmembrane segment at 229 to 249 (IPVVTMMGLQFGFLLGGSIVV) threads the bilayer. At 250-277 (EKVFNWPGLGRLLVDSVEMRDYPVIQAE) the chain is on the periplasmic side. Residues 278-298 (ILLFSLEFILINLVVDVLYAA) traverse the membrane as a helical segment. Residues 299 to 306 (INPAIRYK) lie on the Cytoplasmic side of the membrane.

The protein belongs to the binding-protein-dependent transport system permease family. The complex is composed of two ATP-binding proteins (GsiA), two transmembrane proteins (GsiC and GsiD) and a solute-binding protein (GsiB).

It is found in the cell inner membrane. In terms of biological role, part of the ABC transporter complex GsiABCD involved in glutathione import. Probably responsible for the translocation of the substrate across the membrane. This Shigella boydii serotype 4 (strain Sb227) protein is Glutathione transport system permease protein GsiC.